A 483-amino-acid chain; its full sequence is Betaine aldehyde dehydrogenase (483 aa).

2 residues coordinate K(+): I27 and D93. 149–151 (GAW) is an NAD(+) binding site. K161 (charge relay system) is an active-site residue. 175 to 178 (KPSE) contributes to the NAD(+) binding site. Residue V179 coordinates K(+). 228-231 (SVPT) provides a ligand contact to NAD(+). K(+) is bound at residue V243. E249 functions as the Proton acceptor in the catalytic mechanism. NAD(+)-binding residues include G251, C283, and E380. The Nucleophile role is filled by C283. C283 bears the Cysteine sulfenic acid (-SOH) mark. The K(+) site is built by K450 and G453. The Charge relay system role is filled by E457.

Belongs to the aldehyde dehydrogenase family. In terms of assembly, dimer of dimers. The cofactor is K(+).

The catalysed reaction is betaine aldehyde + NAD(+) + H2O = glycine betaine + NADH + 2 H(+). It functions in the pathway amine and polyamine biosynthesis; betaine biosynthesis via choline pathway; betaine from betaine aldehyde: step 1/1. In terms of biological role, involved in the biosynthesis of the osmoprotectant glycine betaine. Catalyzes the irreversible oxidation of betaine aldehyde to the corresponding acid. The protein is Betaine aldehyde dehydrogenase of Cereibacter sphaeroides (strain ATCC 17025 / ATH 2.4.3) (Rhodobacter sphaeroides).